Here is a 151-residue protein sequence, read N- to C-terminus: 3-hydroxyacyl-[acyl-carrier-protein] dehydratase FabZ (151 aa).

The active site involves H58.

Belongs to the thioester dehydratase family. FabZ subfamily.

The protein localises to the cytoplasm. The catalysed reaction is a (3R)-hydroxyacyl-[ACP] = a (2E)-enoyl-[ACP] + H2O. In terms of biological role, involved in unsaturated fatty acids biosynthesis. Catalyzes the dehydration of short chain beta-hydroxyacyl-ACPs and long chain saturated and unsaturated beta-hydroxyacyl-ACPs. The sequence is that of 3-hydroxyacyl-[acyl-carrier-protein] dehydratase FabZ from Histophilus somni (strain 129Pt) (Haemophilus somnus).